We begin with the raw amino-acid sequence, 447 residues long: Chromosomal replication initiator protein DnaA (447 aa).

The domain I, interacts with DnaA modulators stretch occupies residues 1 to 79 (MVSCENLWQQ…TGQEITVKLI (79 aa)). The domain II stretch occupies residues 79–105 (ITDGLEPHSLIGQESSLPMETTPKNAT). The interval 106–322 (ALNGKYTFSR…GALIRAIAYT (217 aa)) is domain III, AAA+ region. 4 residues coordinate ATP: Gly150, Gly152, Lys153, and Thr154. The tract at residues 323-447 (SLSNVAMTVE…INIAGQAPES (125 aa)) is domain IV, binds dsDNA.

Belongs to the DnaA family. As to quaternary structure, oligomerizes as a right-handed, spiral filament on DNA at oriC.

The protein localises to the cytoplasm. Its function is as follows. Plays an essential role in the initiation and regulation of chromosomal replication. ATP-DnaA binds to the origin of replication (oriC) to initiate formation of the DNA replication initiation complex once per cell cycle. Binds the DnaA box (a 9 base pair repeat at the origin) and separates the double-stranded (ds)DNA. Forms a right-handed helical filament on oriC DNA; dsDNA binds to the exterior of the filament while single-stranded (ss)DNA is stabiized in the filament's interior. The ATP-DnaA-oriC complex binds and stabilizes one strand of the AT-rich DNA unwinding element (DUE), permitting loading of DNA polymerase. After initiation quickly degrades to an ADP-DnaA complex that is not apt for DNA replication. Binds acidic phospholipids. Functionally, isolated domain IV (residues 348-447) binds both E.coli and B.subtilis oriC. The chain is Chromosomal replication initiator protein DnaA from Synechocystis sp. (strain ATCC 27184 / PCC 6803 / Kazusa).